Reading from the N-terminus, the 351-residue chain is Translation initiation factor eIF2B subunit beta (351 aa).

This sequence belongs to the eIF-2B alpha/beta/delta subunits family. In terms of assembly, component of the translation initiation factor 2B (eIF2B) complex which is a heterodecamer of two sets of five different subunits: alpha, beta, gamma, delta and epsilon. Subunits alpha, beta and delta comprise a regulatory subcomplex and subunits epsilon and gamma comprise a catalytic subcomplex. Within the complex, the hexameric regulatory complex resides at the center, with the two heterodimeric catalytic subcomplexes bound on opposite sides.

Its subcellular location is the cytoplasm. It localises to the cytosol. Its activity is regulated as follows. Activated by the chemical integrated stress response (ISR) inhibitor ISRIB which stimulates guanine nucleotide exchange factor activity for both phosphorylated and unphosphorylated eIF2. Functionally, acts as a component of the translation initiation factor 2B (eIF2B) complex, which catalyzes the exchange of GDP for GTP on eukaryotic initiation factor 2 (eIF2) gamma subunit. Its guanine nucleotide exchange factor activity is repressed when bound to eIF2 complex phosphorylated on the alpha subunit, thereby limiting the amount of methionyl-initiator methionine tRNA available to the ribosome and consequently global translation is repressed. The chain is Translation initiation factor eIF2B subunit beta (EIF2B2) from Oryctolagus cuniculus (Rabbit).